The following is a 398-amino-acid chain: Argininosuccinate synthase (398 aa).

8 to 16 (AYSGGLDTS) provides a ligand contact to ATP. Tyrosine 87 provides a ligand contact to L-citrulline. Glycine 117 contributes to the ATP binding site. Positions 119, 123, and 124 each coordinate L-aspartate. Position 123 (asparagine 123) interacts with L-citrulline. Residues arginine 127, serine 175, glutamate 260, and tyrosine 272 each contribute to the L-citrulline site.

It belongs to the argininosuccinate synthase family. Type 1 subfamily. Homotetramer.

The protein localises to the cytoplasm. It carries out the reaction L-citrulline + L-aspartate + ATP = 2-(N(omega)-L-arginino)succinate + AMP + diphosphate + H(+). It functions in the pathway amino-acid biosynthesis; L-arginine biosynthesis; L-arginine from L-ornithine and carbamoyl phosphate: step 2/3. In Mycobacterium tuberculosis (strain ATCC 25618 / H37Rv), this protein is Argininosuccinate synthase.